We begin with the raw amino-acid sequence, 106 residues long: Nucleoid-associated protein XAC1110 (106 aa).

The segment covering 80–89 has biased composition (basic and acidic residues); it reads KIDAESKDRM. The disordered stretch occupies residues 80–106; that stretch reads KIDAESKDRMGSATAGMQLPPGMKLPF.

Belongs to the YbaB/EbfC family. Homodimer.

The protein resides in the cytoplasm. The protein localises to the nucleoid. In terms of biological role, binds to DNA and alters its conformation. May be involved in regulation of gene expression, nucleoid organization and DNA protection. This Xanthomonas axonopodis pv. citri (strain 306) protein is Nucleoid-associated protein XAC1110.